The primary structure comprises 54 residues: Salt stress-induced hydrophobic peptide ESI3 (54 aa).

A run of 2 helical transmembrane segments spans residues 2–22 (GSAT…GVFL) and 34–54 (LLLT…VLVV).

This sequence belongs to the UPF0057 (PMP3) family.

It is found in the membrane. This is Salt stress-induced hydrophobic peptide ESI3 (ESI3) from Thinopyrum elongatum (Tall wheatgrass).